Reading from the N-terminus, the 733-residue chain is Zinc finger protein indra (733 aa).

Residues 17-91 (VRCDHCGTSQ…RETVDRVQEQ (75 aa)) enclose the ZAD domain. Zn(2+)-binding residues include Cys-19, Cys-22, Cys-64, and Cys-67. A compositionally biased stretch (basic and acidic residues) spans 90–100 (EQPAKKTKVAE). Residues 90–121 (EQPAKKTKVAEIEEPSTQESDKKAVKVPKKNT) form a disordered region. Phosphoserine is present on residues Ser-109, Ser-153, and Ser-176. Thr-180 and Thr-188 each carry phosphothreonine. 2 C2H2-type zinc fingers span residues 228 to 251 (FQCP…QKEH) and 259 to 282 (YPCT…RDTH). Basic and acidic residues predominate over residues 285–316 (TFESEAKTKAKESKEKEAKSGAKNKIDAKAKE). Residues 285–336 (TFESEAKTKAKESKEKEAKSGAKNKIDAKAKETNAVSQRKKPKEKKSKEKKT) form a disordered region. 2 C2H2-type zinc fingers span residues 416–439 (FQCE…KTVH) and 447–469 (FKCH…MTLH). Disordered regions lie at residues 499–525 (IENT…FTNR) and 540–622 (AFKT…SSDV). Polar residues predominate over residues 592–602 (SVSTTNGNSPA). A phosphoserine mark is found at Ser-600, Ser-642, and Ser-646. Thr-647 is subject to Phosphothreonine. C2H2-type zinc fingers lie at residues 653–676 (LSCD…EKKH) and 708–733 (LPCG…RKRH). The residue at position 654 (Ser-654) is a Phosphoserine.

Belongs to the krueppel C2H2-type zinc-finger protein family.

It localises to the nucleus. Its subcellular location is the nucleolus. Its function is as follows. Required for rDNA copy number maintenance and non-random sister chromatid segregation (NRSS) following unequal sister chromatid exchange. Binds ribosomal DNA (rDNA) preferentially binding to intergenic spacers (IGS) regions on both X and Y chromosomes. Essential for NRSS, a mechanism which contributes to the recovery and maintenance of inherently unstable rDNA copy numbers so that the integrity of the germline genome is upheld over generations and germline immortality is sustained. May be involved in transcriptional regulation. The protein is Zinc finger protein indra of Drosophila melanogaster (Fruit fly).